The primary structure comprises 513 residues: Ectonucleoside triphosphate diphosphohydrolase 1 (513 aa).

At 1 to 16 the chain is on the cytoplasmic side; it reads MEDRRESELKVFCSKN. A helical membrane pass occupies residues 17-37; that stretch reads ILSILGFSCIIAVIALLALGL. Residues 38–481 are Extracellular-facing; it reads TQNKALPENV…SPPLPHSTYV (444 aa). An N-linked (GlcNAc...) asparagine glycan is attached at Asn73. Catalysis depends on Glu174, which acts as the Proton acceptor. 2 N-linked (GlcNAc...) asparagine glycosylation sites follow: Asn227 and Asn245. Cystine bridges form between Cys255–Cys300 and Cys281–Cys327. 2 N-linked (GlcNAc...) asparagine glycosylation sites follow: Asn307 and Asn336. Cys340 and Cys345 are disulfide-bonded. Asn373 is a glycosylation site (N-linked (GlcNAc...) asparagine). Cys393 and Cys416 are oxidised to a cystine. N-linked (GlcNAc...) asparagine glycosylation is present at Asn460. Residues 482–502 form a helical membrane-spanning segment; sequence FLMVLFSLILLAVIIVGIVVF. The Cytoplasmic segment spans residues 503-513; it reads HKPSYFWKDMV.

Belongs to the GDA1/CD39 NTPase family. Homodimer; disulfide-linked. Requires Ca(2+) as cofactor. It depends on Mg(2+) as a cofactor. In terms of processing, N-glycosylated. The N-terminus is blocked. Post-translationally, palmitoylated on Cys-13; which is required for caveola targeting.

It is found in the membrane. Its subcellular location is the caveola. The catalysed reaction is a ribonucleoside 5'-triphosphate + 2 H2O = a ribonucleoside 5'-phosphate + 2 phosphate + 2 H(+). It catalyses the reaction a ribonucleoside 5'-triphosphate + H2O = a ribonucleoside 5'-diphosphate + phosphate + H(+). The enzyme catalyses a ribonucleoside 5'-diphosphate + H2O = a ribonucleoside 5'-phosphate + phosphate + H(+). It carries out the reaction ATP + 2 H2O = AMP + 2 phosphate + 2 H(+). The catalysed reaction is ATP + H2O = ADP + phosphate + H(+). It catalyses the reaction ADP + H2O = AMP + phosphate + H(+). The enzyme catalyses CTP + 2 H2O = CMP + 2 phosphate + 2 H(+). It carries out the reaction CTP + H2O = CDP + phosphate + H(+). The catalysed reaction is CDP + H2O = CMP + phosphate + H(+). It catalyses the reaction GTP + 2 H2O = GMP + 2 phosphate + 2 H(+). The enzyme catalyses GTP + H2O = GDP + phosphate + H(+). It carries out the reaction GDP + H2O = GMP + phosphate + H(+). The catalysed reaction is ITP + 2 H2O = IMP + 2 phosphate + 2 H(+). It catalyses the reaction ITP + H2O = IDP + phosphate + H(+). The enzyme catalyses IDP + H2O = IMP + phosphate + H(+). It carries out the reaction UTP + 2 H2O = UMP + 2 phosphate + 2 H(+). The catalysed reaction is UTP + H2O = UDP + phosphate + H(+). It catalyses the reaction UDP + H2O = UMP + phosphate + H(+). In terms of biological role, catalyzes the hydrolysis of both di- and triphosphate nucleotides (NDPs and NTPs) and hydrolyze NTPs to nucleotide monophosphates (NMPs) in two distinct successive phosphate-releasing steps, with NDPs as intermediates and participates in the regulation of extracellular levels of nucleotides. By hydrolyzing proinflammatory ATP and platelet-activating ADP to AMP, it blocks platelet aggregation and supports blood flow. This Bos taurus (Bovine) protein is Ectonucleoside triphosphate diphosphohydrolase 1.